A 77-amino-acid polypeptide reads, in one-letter code: Thioredoxin (77 aa).

Active-site nucleophile residues include Cys-11 and Cys-14. The cysteines at positions 11 and 14 are disulfide-linked.

Belongs to the glutaredoxin family.

In terms of biological role, does not function as a glutathione-disulfide oxidoreductase in the presence of glutathione and glutathione reductase. Has low thioredoxin activity in vitro. In Methanothermobacter thermautotrophicus (strain ATCC 29096 / DSM 1053 / JCM 10044 / NBRC 100330 / Delta H) (Methanobacterium thermoautotrophicum), this protein is Thioredoxin.